The following is a 169-amino-acid chain: Large ribosomal subunit protein uL5 (169 aa).

It belongs to the universal ribosomal protein uL5 family. Part of the 50S ribosomal subunit; contacts the 5S rRNA and probably tRNA. Forms a bridge to the 30S subunit in the 70S ribosome.

This is one of the proteins that bind and probably mediate the attachment of the 5S RNA into the large ribosomal subunit, where it forms part of the central protuberance. In the 70S ribosome it contacts protein S13 of the 30S subunit (bridge B1b), connecting the 2 subunits; this bridge is implicated in subunit movement. May contact the P site tRNA; the 5S rRNA and some of its associated proteins might help stabilize positioning of ribosome-bound tRNAs. This Methanococcoides burtonii (strain DSM 6242 / NBRC 107633 / OCM 468 / ACE-M) protein is Large ribosomal subunit protein uL5.